A 149-amino-acid polypeptide reads, in one-letter code: Large ribosomal subunit protein bL9 (149 aa).

The protein belongs to the bacterial ribosomal protein bL9 family.

Its function is as follows. Binds to the 23S rRNA. This Anaeromyxobacter dehalogenans (strain 2CP-C) protein is Large ribosomal subunit protein bL9.